The sequence spans 68 residues: Conotoxin tx3b (68 aa).

The N-terminal stretch at 1–19 (MSKLGALLTICLLLFSLTA) is a signal peptide. Positions 20-52 (VPLDGDQHADQPAQRLQDRIPTEDHPLFDPNKR) are excised as a propeptide. 3 cysteine pairs are disulfide-bonded: cysteine 53-cysteine 67, cysteine 54-cysteine 63, and cysteine 59-cysteine 66. Methionine 61 is modified (methionine sulfoxide; partial). Residue cysteine 67 is modified to Cysteine amide.

Expressed by the venom duct.

The protein localises to the secreted. In terms of biological role, intracranial injection into mice causes scratching, hyperactivity and circular motion. The sequence is that of Conotoxin tx3b from Conus textile (Cloth-of-gold cone).